Consider the following 473-residue polypeptide: Aspartyl/glutamyl-tRNA(Asn/Gln) amidotransferase subunit B (473 aa).

The protein belongs to the GatB/GatE family. GatB subfamily. In terms of assembly, heterotrimer of A, B and C subunits.

The catalysed reaction is L-glutamyl-tRNA(Gln) + L-glutamine + ATP + H2O = L-glutaminyl-tRNA(Gln) + L-glutamate + ADP + phosphate + H(+). It carries out the reaction L-aspartyl-tRNA(Asn) + L-glutamine + ATP + H2O = L-asparaginyl-tRNA(Asn) + L-glutamate + ADP + phosphate + 2 H(+). Functionally, allows the formation of correctly charged Asn-tRNA(Asn) or Gln-tRNA(Gln) through the transamidation of misacylated Asp-tRNA(Asn) or Glu-tRNA(Gln) in organisms which lack either or both of asparaginyl-tRNA or glutaminyl-tRNA synthetases. The reaction takes place in the presence of glutamine and ATP through an activated phospho-Asp-tRNA(Asn) or phospho-Glu-tRNA(Gln). This is Aspartyl/glutamyl-tRNA(Asn/Gln) amidotransferase subunit B from Campylobacter hominis (strain ATCC BAA-381 / DSM 21671 / CCUG 45161 / LMG 19568 / NCTC 13146 / CH001A).